A 52-amino-acid chain; its full sequence is Large ribosomal subunit protein bL33 (52 aa).

Belongs to the bacterial ribosomal protein bL33 family.

This Chlamydia trachomatis serovar L2 (strain ATCC VR-902B / DSM 19102 / 434/Bu) protein is Large ribosomal subunit protein bL33.